Here is a 226-residue protein sequence, read N- to C-terminus: Probable functional amyloid protease FapD (226 aa).

The N-terminal stretch at 1 to 18 is a signal peptide; that stretch reads MRTLILSLLLLVDLTTQA. Residues 50-180 form the Peptidase C39 domain; sequence QKTDFSCGAA…KGWNGIVFAV (131 aa). Cys56 is a catalytic residue.

Belongs to the FapD family.

The protein localises to the periplasm. Probable protease that might be involved in processing fibril precursors. Upon overexpression of the endogenous six-gene locus (fapA-fapF), cells form large clumps during liquid growth, make large amounts of biofilm and produce amyloid fibrils. The sequence is that of Probable functional amyloid protease FapD from Pseudomonas aeruginosa (strain ATCC 15692 / DSM 22644 / CIP 104116 / JCM 14847 / LMG 12228 / 1C / PRS 101 / PAO1).